Here is a 73-residue protein sequence, read N- to C-terminus: Large ribosomal subunit protein bL31 (73 aa).

The Zn(2+) site is built by Cys-16, Cys-18, Cys-37, and Cys-40.

This sequence belongs to the bacterial ribosomal protein bL31 family. Type A subfamily. In terms of assembly, part of the 50S ribosomal subunit. Zn(2+) is required as a cofactor.

Binds the 23S rRNA. The protein is Large ribosomal subunit protein bL31 of Blochmanniella floridana.